Here is an 853-residue protein sequence, read N- to C-terminus: MFGLSKMLRVGEGRAVKRLKKIADDVIALEADYTDLTDEELKAKTHEFQERIAQGESVDDLLLEAFAVAREASWRVLGQKHYPVQIMGGAALHFGNVAEMRTGEGKTLTCVLPAYLNALEGKGVHVVTVNDYLAKRDAEWMGRVHRWLGLNVGVILANMQPAERREAYNADITYGTNNELGFDYLRDNMVRSLDELVQRGHHYAIVDEVDSILIDEARTPLIISGPVDGSSQWYSVFAQIVPRMTRDIHYEVDNRKRTVGVREEGVAFVEDQLGIDNLYAPEHSQLVSYLNNAIKAKELFNRDKDYIVRNGEVLIVDDFTGRVLDGRRYNEGMHQAIEAKENVEIKNENQTLATITLQNYFRLYDKLSGMTGTAETEASELHQIYKLDVIPIPTNRPNQREDMTDLVYKTQEAKFAAVVDDISERVTKGQPVLVGTTSVERSEYLSQLLQRRGIKHSVLNAKFHEQEAQIVAKAGLPGAVTVATNMAGRGTDIVLGGNADIIADINLRERGLNPVDTPEEYEAAWDAELARVKEKGAELAEKVREAGGLYVLGTERHESRRIDNQLRGRAGRQGDPGTTRFYLSMRDDLMVRFVGQTMENMMNRLNVPDDVPIEAKMVTNSIKSAQTSVENQNFEMRKNVLKYDEVMNEQRKVIYTERREILESADIAADIQKMIDDTIGAYVDAATATGYVEDWDLETLWNALESLYGPSFSAQELIDGDSYGESGELSASDLRKAVLEDAHKQYAELEENVTAIGGEAQMRNIERMVILPVIDTKWREHLYEMDYLKEGIGLRAMAQRDPLVEYQKEGGDMFNAMKDAVKEETVRQLFLLRKQFAVANEQPAETEEGTVEA.

Residues Gln85, 103 to 107, and Asp492 contribute to the ATP site; that span reads GEGKT.

It belongs to the SecA family. Monomer and homodimer. Part of the essential Sec protein translocation apparatus which comprises SecA, SecYEG and auxiliary proteins SecDF. Other proteins may also be involved.

It is found in the cell membrane. The protein resides in the cytoplasm. The enzyme catalyses ATP + H2O + cellular proteinSide 1 = ADP + phosphate + cellular proteinSide 2.. Part of the Sec protein translocase complex. Interacts with the SecYEG preprotein conducting channel. Has a central role in coupling the hydrolysis of ATP to the transfer of proteins into and across the cell membrane, serving as an ATP-driven molecular motor driving the stepwise translocation of polypeptide chains across the membrane. The polypeptide is Protein translocase subunit SecA 1 (Corynebacterium diphtheriae (strain ATCC 700971 / NCTC 13129 / Biotype gravis)).